The chain runs to 93 residues: Small ribosomal subunit protein uS17 (93 aa).

The protein belongs to the universal ribosomal protein uS17 family. Part of the 30S ribosomal subunit.

Its function is as follows. One of the primary rRNA binding proteins, it binds specifically to the 5'-end of 16S ribosomal RNA. This chain is Small ribosomal subunit protein uS17, found in Rhodococcus jostii (strain RHA1).